A 275-amino-acid polypeptide reads, in one-letter code: Bis(5'-nucleosyl)-tetraphosphatase, symmetrical (275 aa).

Belongs to the Ap4A hydrolase family.

It carries out the reaction P(1),P(4)-bis(5'-adenosyl) tetraphosphate + H2O = 2 ADP + 2 H(+). Functionally, hydrolyzes diadenosine 5',5'''-P1,P4-tetraphosphate to yield ADP. The polypeptide is Bis(5'-nucleosyl)-tetraphosphatase, symmetrical (apaH) (Haemophilus influenzae (strain ATCC 51907 / DSM 11121 / KW20 / Rd)).